The primary structure comprises 356 residues: GATA zinc finger domain-containing protein 17 (356 aa).

Residues 91–119 adopt a coiled-coil conformation; that stretch reads LKEFDALEASLNAELECLELQYSSDTSEL. Over residues 158 to 188 the composition is skewed to low complexity; the sequence is TASTSTSTPTNTTTTTTTTSNSLTKNNNSAL. The interval 158–294 is disordered; sequence TASTSTSTPT…DITEESKVKE (137 aa). Residues 206-228 show a composition bias toward acidic residues; the sequence is SSDDEEDDQKDDQDKDDSDEDNV. Residues 260 to 284 show a composition bias toward low complexity; sequence TAITTTTTPITTTDSNIIGTTTTTD. Residues 304-331 form a GATA-type zinc finger; it reads CYVCKVTETPYWRRGTDNGVVVDLCNEC.

This chain is GATA zinc finger domain-containing protein 17 (gtaQ), found in Dictyostelium discoideum (Social amoeba).